Reading from the N-terminus, the 432-residue chain is Phosphomethylpyrimidine synthase (432 aa).

Substrate-binding positions include N66, M95, Y124, H163, 185-187 (SRG), 226-229 (DGLR), and E265. Position 269 (H269) interacts with Zn(2+). A substrate-binding site is contributed by Y292. H333 serves as a coordination point for Zn(2+). Positions 409, 412, and 416 each coordinate [4Fe-4S] cluster.

Belongs to the ThiC family. The cofactor is [4Fe-4S] cluster.

It catalyses the reaction 5-amino-1-(5-phospho-beta-D-ribosyl)imidazole + S-adenosyl-L-methionine = 4-amino-2-methyl-5-(phosphooxymethyl)pyrimidine + CO + 5'-deoxyadenosine + formate + L-methionine + 3 H(+). It functions in the pathway cofactor biosynthesis; thiamine diphosphate biosynthesis. Catalyzes the synthesis of the hydroxymethylpyrimidine phosphate (HMP-P) moiety of thiamine from aminoimidazole ribotide (AIR) in a radical S-adenosyl-L-methionine (SAM)-dependent reaction. In Moorella thermoacetica (strain ATCC 39073 / JCM 9320), this protein is Phosphomethylpyrimidine synthase.